Consider the following 521-residue polypeptide: Putative FNIP repeat-containing protein L162 (521 aa).

2 FNIP repeats span residues 179-221 (FNKS…LGYK) and 222-263 (YNYP…MGGR).

The protein is Putative FNIP repeat-containing protein L162 of Acanthamoeba polyphaga mimivirus (APMV).